The sequence spans 311 residues: Quinolinate synthase (311 aa).

2 residues coordinate iminosuccinate: histidine 25 and serine 42. Cysteine 87 provides a ligand contact to [4Fe-4S] cluster. Residues 113-115 (YIN) and serine 130 contribute to the iminosuccinate site. Cysteine 175 is a binding site for [4Fe-4S] cluster. Residues 201–203 (HPE) and threonine 218 each bind iminosuccinate. A [4Fe-4S] cluster-binding site is contributed by cysteine 268.

The protein belongs to the quinolinate synthase family. Type 2 subfamily. The cofactor is [4Fe-4S] cluster.

The protein resides in the cytoplasm. It catalyses the reaction iminosuccinate + dihydroxyacetone phosphate = quinolinate + phosphate + 2 H2O + H(+). It functions in the pathway cofactor biosynthesis; NAD(+) biosynthesis; quinolinate from iminoaspartate: step 1/1. Catalyzes the condensation of iminoaspartate with dihydroxyacetone phosphate to form quinolinate. The polypeptide is Quinolinate synthase (Saccharolobus solfataricus (strain ATCC 35092 / DSM 1617 / JCM 11322 / P2) (Sulfolobus solfataricus)).